Here is a 1375-residue protein sequence, read N- to C-terminus: DNA-directed RNA polymerase subunit beta (1375 aa).

It belongs to the RNA polymerase beta chain family. In terms of assembly, the RNAP catalytic core consists of 2 alpha, 1 beta, 1 beta' and 1 omega subunit. When a sigma factor is associated with the core the holoenzyme is formed, which can initiate transcription.

The catalysed reaction is RNA(n) + a ribonucleoside 5'-triphosphate = RNA(n+1) + diphosphate. In terms of biological role, DNA-dependent RNA polymerase catalyzes the transcription of DNA into RNA using the four ribonucleoside triphosphates as substrates. The sequence is that of DNA-directed RNA polymerase subunit beta from Methylibium petroleiphilum (strain ATCC BAA-1232 / LMG 22953 / PM1).